The following is a 274-amino-acid chain: Small ribosomal subunit protein uS2 (274 aa).

The segment at 255 to 274 is disordered; sequence AEAESEDKGEVLYSFDDEEE.

The protein belongs to the universal ribosomal protein uS2 family.

This is Small ribosomal subunit protein uS2 from Gloeobacter violaceus (strain ATCC 29082 / PCC 7421).